The chain runs to 426 residues: Tyrosine--tRNA ligase (426 aa).

L-tyrosine is bound at residue Tyr-35. A 'HIGH' region motif is present at residues 40–49 (PTADSLHIGH). L-tyrosine contacts are provided by Tyr-172 and Gln-176. Residues 232 to 236 (KLGKS) carry the 'KMSKS' region motif. ATP is bound at residue Lys-235. One can recognise an S4 RNA-binding domain in the interval 357–414 (ENIKDILVNSKLSKSKNNAKSVILSSSIRINNKKQKSIDFMFKKEDKLFNLFTLIKKG).

This sequence belongs to the class-I aminoacyl-tRNA synthetase family. TyrS type 1 subfamily. As to quaternary structure, homodimer.

It localises to the cytoplasm. It carries out the reaction tRNA(Tyr) + L-tyrosine + ATP = L-tyrosyl-tRNA(Tyr) + AMP + diphosphate + H(+). Functionally, catalyzes the attachment of tyrosine to tRNA(Tyr) in a two-step reaction: tyrosine is first activated by ATP to form Tyr-AMP and then transferred to the acceptor end of tRNA(Tyr). This chain is Tyrosine--tRNA ligase, found in Wigglesworthia glossinidia brevipalpis.